Consider the following 443-residue polypeptide: Phosphoribosylamine--glycine ligase (443 aa).

The region spanning 109–324 (RNLFKKYNIK…FLDVCFGISN (216 aa)) is the ATP-grasp domain. 140–202 (MTGLGKDVVV…EEKLVGVEFT (63 aa)) is a binding site for ATP. 3 residues coordinate Mg(2+): Q282, E294, and N296. Mn(2+) contacts are provided by Q282, E294, and N296.

The protein belongs to the GARS family. It depends on Mg(2+) as a cofactor. Requires Mn(2+) as cofactor.

The enzyme catalyses 5-phospho-beta-D-ribosylamine + glycine + ATP = N(1)-(5-phospho-beta-D-ribosyl)glycinamide + ADP + phosphate + H(+). It functions in the pathway purine metabolism; IMP biosynthesis via de novo pathway; N(1)-(5-phospho-D-ribosyl)glycinamide from 5-phospho-alpha-D-ribose 1-diphosphate: step 2/2. The sequence is that of Phosphoribosylamine--glycine ligase from Methanococcus vannielii (strain ATCC 35089 / DSM 1224 / JCM 13029 / OCM 148 / SB).